Reading from the N-terminus, the 633-residue chain is Chaperone protein dnaK2 (633 aa).

Thr197 is subject to Phosphothreonine; by autocatalysis. The interval 600–633 (SNAASQAADGTSSESNNSTEGNDDVIDAEFTESK) is disordered. A compositionally biased stretch (low complexity) spans 608 to 619 (DGTSSESNNSTE). Residues 620–633 (GNDDVIDAEFTESK) are compositionally biased toward acidic residues.

Belongs to the heat shock protein 70 family.

Its function is as follows. Acts as a chaperone. The protein is Chaperone protein dnaK2 (dnaK2) of Prochlorococcus marinus (strain SARG / CCMP1375 / SS120).